The following is a 152-amino-acid chain: Ribosome maturation factor RimP (152 aa).

The protein belongs to the RimP family.

It is found in the cytoplasm. In terms of biological role, required for maturation of 30S ribosomal subunits. The sequence is that of Ribosome maturation factor RimP from Desulfatibacillum aliphaticivorans.